We begin with the raw amino-acid sequence, 602 residues long: Elongation factor 4 (602 aa).

The tr-type G domain maps to 7 to 188; it reads ENIRNFSIIA…SIIRLVPPPK (182 aa). GTP-binding positions include 19–24 and 135–138; these read DHGKST and NKID.

Belongs to the TRAFAC class translation factor GTPase superfamily. Classic translation factor GTPase family. LepA subfamily.

It localises to the cell inner membrane. It catalyses the reaction GTP + H2O = GDP + phosphate + H(+). Required for accurate and efficient protein synthesis under certain stress conditions. May act as a fidelity factor of the translation reaction, by catalyzing a one-codon backward translocation of tRNAs on improperly translocated ribosomes. Back-translocation proceeds from a post-translocation (POST) complex to a pre-translocation (PRE) complex, thus giving elongation factor G a second chance to translocate the tRNAs correctly. Binds to ribosomes in a GTP-dependent manner. In Chlamydia trachomatis serovar D (strain ATCC VR-885 / DSM 19411 / UW-3/Cx), this protein is Elongation factor 4.